The primary structure comprises 320 residues: MSVGFIGAGQLAYALARGFTAAGILSAHKIIASSPEMNLPTVSALRKMGVNLTRSNKETVKHSDVLFLAVKPHIIPFILDEIGADVQARHIVVSCAAGVTISSVEKKLMAFQPAPKVIRCMTNTPVVVQEGATVYATGTHALVEDGQLLEQLMSSVGFCTEVEEDLIDAVTGLSGSGPAYAFMALDALADGGVKMGLPRRLAIQLGAQALLGAAKMLLDSEQHPCQLKDNVCSPGGATIHALHFLESGGFRSLLINAVEASCIRTRELQSMADQEKISPAALKKTLLDRVKLESPTVSTLTPSSPGKLLTRSLALGGKKD.

Residue Ser-2 is modified to N-acetylserine. NADP(+) contacts are provided by residues 6–11 (IGAGQL) and Ser-34. NADPH contacts are provided by Ala-8, Gln-10, Leu-11, Ser-34, Glu-36, Asn-56, Val-70, Lys-71, and Ala-97. Residues Asn-56, 69-72 (AVKP), and 95-97 (CAA) contribute to the NADP(+) site. An L-proline-binding site is contributed by Glu-164. NADPH is bound at residue Asn-230. Residues Ala-237 and Thr-238 each coordinate L-proline. Low complexity predominate over residues 295-305 (PTVSTLTPSSP). The tract at residues 295-320 (PTVSTLTPSSPGKLLTRSLALGGKKD) is disordered. Ser-304 carries the phosphoserine modification.

This sequence belongs to the pyrroline-5-carboxylate reductase family. As to quaternary structure, homodecamer; composed of 5 homodimers. Interacts with LTO1. Detected in erythrocytes (at protein level). Expressed in fetal brain.

It is found in the cytoplasm. The protein resides in the mitochondrion. The enzyme catalyses L-proline + NADP(+) = (S)-1-pyrroline-5-carboxylate + NADPH + 2 H(+). The catalysed reaction is L-proline + NAD(+) = (S)-1-pyrroline-5-carboxylate + NADH + 2 H(+). Its pathway is amino-acid biosynthesis; L-proline biosynthesis; L-proline from L-glutamate 5-semialdehyde: step 1/1. With respect to regulation, subject to competitive inhibition by NADP. Was reported not to be inhibited by proline. However other study demonstrated an inhibition by proline. Oxidoreductase that catalyzes the last step in proline biosynthesis, which corresponds to the reduction of pyrroline-5-carboxylate to L-proline using NAD(P)H. At physiologic concentrations, has higher specific activity in the presence of NADH. Involved in cellular response to oxidative stress. In some cell types, such as erythrocytes, its primary function may be the generation of NADP(+). The sequence is that of Pyrroline-5-carboxylate reductase 2 from Homo sapiens (Human).